Here is a 529-residue protein sequence, read N- to C-terminus: PTS system alpha-glucoside-specific EIICB component (529 aa).

In terms of domain architecture, PTS EIIC type-1 spans 1 to 416; the sequence is MMKKVQRFGG…MDLKTPGRED (416 aa). A run of 12 helical transmembrane segments spans residues 8–28, 59–79, 91–111, 130–150, 170–190, 198–218, 222–242, 272–292, 304–324, 328–348, 352–372, and 380–400; these read FGGAMMAPVLLFAFTGIVVGL, GWTVFRQMPILFAIGLPISLA, FALYTTFNYFVAAILKVFYGI, VPTLDTNLFGGILIAALVVYL, VFVYIVGFVVMIPCAFLTVLI, ISALQGFMKASGIFGVWIYTF, ILIPTGLHHFVYTPFVFGPAA, GGFALHGNSKIFGAPGIALAM, VAALLIPIIFTAVISGITEPL, FLFIAPVLFAVHACLAATMAA, AFGVVGNMGGGLLDFFFLNWI, and GTVIAQIVIGLIFTAIYFVVF. The 80-residue stretch at 450 to 529 folds into the PTS EIIB type-1 domain; the sequence is AQKGAIILEA…ERIEEMMKKG (80 aa). The active-site Phosphocysteine intermediate; for EIIB activity is the cysteine 472.

The protein resides in the cell membrane. The phosphoenolpyruvate-dependent sugar phosphotransferase system (sugar PTS), a major carbohydrate active -transport system, catalyzes the phosphorylation of incoming sugar substrates concomitantly with their translocation across the cell membrane. This system is probably involved in transport of the alpha-glucosides trehalulose, turanose, maltulose and palatinose. In Leptotrichia buccalis (strain ATCC 14201 / DSM 1135 / JCM 12969 / NCTC 10249 / C-1013-b), this protein is PTS system alpha-glucoside-specific EIICB component.